Here is a 375-residue protein sequence, read N- to C-terminus: Putative glutamate--cysteine ligase 2 (375 aa).

The protein belongs to the glutamate--cysteine ligase type 2 family. YbdK subfamily.

It carries out the reaction L-cysteine + L-glutamate + ATP = gamma-L-glutamyl-L-cysteine + ADP + phosphate + H(+). Its function is as follows. ATP-dependent carboxylate-amine ligase which exhibits weak glutamate--cysteine ligase activity. This is Putative glutamate--cysteine ligase 2 from Sorangium cellulosum (strain So ce56) (Polyangium cellulosum (strain So ce56)).